A 200-amino-acid polypeptide reads, in one-letter code: Protein GrpE (200 aa).

A compositionally biased stretch (basic and acidic residues) spans 1–12 (MSNEEIKNKDEQ). The interval 1-30 (MSNEEIKNKDEQLQQDAVETEAEVVGTDAD) is disordered.

Belongs to the GrpE family. As to quaternary structure, homodimer.

The protein resides in the cytoplasm. Its function is as follows. Participates actively in the response to hyperosmotic and heat shock by preventing the aggregation of stress-denatured proteins, in association with DnaK and GrpE. It is the nucleotide exchange factor for DnaK and may function as a thermosensor. Unfolded proteins bind initially to DnaJ; upon interaction with the DnaJ-bound protein, DnaK hydrolyzes its bound ATP, resulting in the formation of a stable complex. GrpE releases ADP from DnaK; ATP binding to DnaK triggers the release of the substrate protein, thus completing the reaction cycle. Several rounds of ATP-dependent interactions between DnaJ, DnaK and GrpE are required for fully efficient folding. The protein is Protein GrpE of Vibrio cholerae serotype O1 (strain ATCC 39315 / El Tor Inaba N16961).